A 292-amino-acid polypeptide reads, in one-letter code: Peroxidase 2 (292 aa).

Disulfide bonds link cysteine 7–cysteine 86, cysteine 40–cysteine 45, cysteine 92–cysteine 288, and cysteine 171–cysteine 199. Residue histidine 38 is the Proton acceptor of the active site. Ca(2+) contacts are provided by aspartate 39, valine 42, glycine 44, aspartate 46, and serine 48. The N-linked (GlcNAc...) asparagine glycan is linked to asparagine 68. Proline 134 provides a ligand contact to substrate. Asparagine 139 is a glycosylation site (N-linked (GlcNAc...) asparagine). Residue histidine 164 coordinates heme b. Threonine 165 lines the Ca(2+) pocket. A glycan (N-linked (GlcNAc...) asparagine) is linked at asparagine 179. Ca(2+) is bound by residues aspartate 210, threonine 213, and aspartate 218.

Belongs to the peroxidase family. Classical plant (class III) peroxidase subfamily. Ca(2+) is required as a cofactor. It depends on heme b as a cofactor.

The enzyme catalyses 2 a phenolic donor + H2O2 = 2 a phenolic radical donor + 2 H2O. Its function is as follows. Removal of H(2)O(2), oxidation of toxic reductants, biosynthesis and degradation of lignin, suberization, auxin catabolism, response to environmental stresses such as wounding, pathogen attack and oxidative stress. These functions might be dependent on each isozyme/isoform in each plant tissue. This chain is Peroxidase 2, found in Cucumis sativus (Cucumber).